A 309-amino-acid chain; its full sequence is Zinc transporter ZIP2 (309 aa).

The Extracellular segment spans residues 1–8 (MEVLLGVK). The helical transmembrane segment at 9 to 29 (IGCLLALLVLTLGCGLTPIYV) threads the bilayer. The Cytoplasmic segment spans residues 30–43 (KWFQMDAATGHHHR). The helical transmembrane segment at 44-64 (VLSLLGCTSAGVFLGAGLMHM) threads the bilayer. Residues 65–103 (TAEALEGIESEIQKFVEQNSTGSKGNSSRDAASSYVEYP) lie on the Extracellular side of the membrane. Residues 104-124 (YGELVISLGFFFVFLLESLAL) form a helical membrane-spanning segment. The Cytoplasmic segment spans residues 125–164 (QCCHGAAGGSTVQEEEWGGTHAFGFHKHPAVPSPSRGPLR). A helical transmembrane segment spans residues 165–185 (ALVLLLSLSFHSVFEGLAVGL). Positions 175 and 179 each coordinate Zn(2+). The Extracellular portion of the chain corresponds to 186–191 (QATVAA). The chain crosses the membrane as a helical span at residues 192–212 (TIQLCVAVLAHKGLVVFSVGL). H202 lines the Zn(2+) pocket. Over 213–225 (RLGKIGTGPRWAT) the chain is Cytoplasmic. The helical transmembrane segment at 226-246 (FCILSLALMSPVGLALGLTVA) threads the bilayer. Residues 247-258 (GGASGQTQGLAQ) lie on the Extracellular side of the membrane. The chain crosses the membrane as a helical span at residues 259–279 (AVLEGIAAGTFLYVTFLEILP). E276 is a binding site for Zn(2+). Residues 280-288 (RELACPEAP) are Cytoplasmic-facing. A helical membrane pass occupies residues 289-309 (LAKYSCVAAGFAFMALIALWA).

This sequence belongs to the ZIP transporter (TC 2.A.5) family. High expression in the liver, skin and ovary.

The protein resides in the cell membrane. It carries out the reaction Zn(2+)(in) = Zn(2+)(out). It catalyses the reaction Cd(2+)(in) = Cd(2+)(out). Functionally, transporter for the divalent cation Zn(2+). Mediates the influx of Zn(2+) into cells from extracellular space. The Zn(2+) uniporter activity is independent of H(+)-driving force, but is modulated by extracellular pH and membrane potential. Transports also other divalent cations Zn(2+), Cd2(+), Cu2(+), Co2(+) in the order of decreasing affinity, respectively. In the skin, aids in the differentiation of keratinocytes in the epidermis. In Mus musculus (Mouse), this protein is Zinc transporter ZIP2 (Slc39a2).